The following is a 448-amino-acid chain: Phosphoglucosamine mutase (448 aa).

Catalysis depends on Ser-104, which acts as the Phosphoserine intermediate. Mg(2+) contacts are provided by Ser-104, Asp-241, Asp-243, and Asp-245. At Ser-104 the chain carries Phosphoserine.

Belongs to the phosphohexose mutase family. It depends on Mg(2+) as a cofactor. Activated by phosphorylation.

The enzyme catalyses alpha-D-glucosamine 1-phosphate = D-glucosamine 6-phosphate. In terms of biological role, catalyzes the conversion of glucosamine-6-phosphate to glucosamine-1-phosphate. The chain is Phosphoglucosamine mutase from Nocardioides sp. (strain ATCC BAA-499 / JS614).